Reading from the N-terminus, the 215-residue chain is MOB kinase activator-like 1B (215 aa).

A disordered region spans residues 1 to 29 (MSLFGLGSRNQKTFRPKKSAPTGSKGAQL). Positions 80, 85, 162, and 167 each coordinate Zn(2+).

The protein belongs to the MOB1/phocein family. Constitutively expressed with higher expression in roots, flowers and pods than in leaves and stems.

It localises to the cytoplasm. The protein resides in the cytoskeleton. The protein localises to the phragmoplast. This is MOB kinase activator-like 1B from Medicago sativa subsp. falcata (Sickle medic).